The primary structure comprises 213 residues: Small ribosomal subunit protein uS5 (213 aa).

The S5 DRBM domain maps to L54–V117.

This sequence belongs to the universal ribosomal protein uS5 family. As to quaternary structure, part of the 30S ribosomal subunit. Contacts protein S4.

In terms of biological role, with S4 and S12 plays an important role in translational accuracy. The polypeptide is Small ribosomal subunit protein uS5 (Hyperthermus butylicus (strain DSM 5456 / JCM 9403 / PLM1-5)).